A 605-amino-acid chain; its full sequence is E3 ubiquitin-protein ligase synoviolin A (605 aa).

A helical transmembrane segment spans residues 1-19; the sequence is MTGASLALTAAVVAHAYYL. Topologically, residues 20 to 35 are lumenal; sequence KNQFYPTVVYLTKSSP. The chain crosses the membrane as a helical span at residues 36 to 56; sequence SMAVLYIQAFVLVFLLGKFMG. The Cytoplasmic segment spans residues 57–92; sequence KVFFGQLRAAEMEHLLERSWYAVTETCLAFTVFRDD. The helical transmembrane segment at 93-113 threads the bilayer; it reads FSPRFVALFTLLLFLKCFHWL. At 114 to 129 the chain is on the lumenal side; it reads AEDRVDFMERSPNISW. Residues 130 to 150 traverse the membrane as a helical segment; that stretch reads LFHFRILALMLLLGVLDAFFV. Residues 151–163 lie on the Cytoplasmic side of the membrane; sequence SHAYHSLVIRGAS. The helical transmembrane segment at 164–184 threads the bilayer; it reads VQLVFGFEYAILMTVILTVFI. Residues 185-218 lie on the Lumenal side of the membrane; it reads KYILHSVDLQSENPWDNKAVYMLYTELFTGFIKV. A helical membrane pass occupies residues 219 to 239; the sequence is LLYVAFMTIMVKVHTFPLFAI. An interaction with p53/TP53 region spans residues 230–264; it reads KVHTFPLFAIRPMYLAMRQFKKAVTDAIMSRRAIR. Topologically, residues 240-605 are cytoplasmic; it reads RPMYLAMRQF…KLETGTTDSQ (366 aa). Zn(2+)-binding residues include C285, C288, C301, H303, H306, C309, C320, and C323. The RING-type; atypical zinc finger occupies 285-324; that stretch reads CIICREEMVTGAKRLPCNHIFHTSCLRSWFQRQQTCPTCR. Residues 334–355 are compositionally biased toward low complexity; the sequence is TQPQTPTEQQNQHQNQAQQQPT. Positions 334-433 are disordered; that stretch reads TQPQTPTEQQ…QPGAALPGFP (100 aa). The segment covering 356 to 391 has biased composition (pro residues); the sequence is PVIPPQPNFPPGILPPFPPGMFPLWPPMGPFPPVPG. A compositionally biased stretch (low complexity) spans 403-414; that stretch reads PGSSSGSSPRPG. The span at 415–424 shows a compositional bias: polar residues; that stretch reads ETSNVGSESQ. Residues 465–496 adopt a coiled-coil conformation; the sequence is EELRAMEGHERQNLEARLQCLQNIHTLLDAAM. The interval 513-605 is disordered; the sequence is QPPISSTSTS…KLETGTTDSQ (93 aa). Residues 516–539 are compositionally biased toward low complexity; that stretch reads ISSTSTSTSSAASASTAPTTSNIS. A compositionally biased stretch (polar residues) spans 546-555; the sequence is DTTSTVTNTE. Low complexity predominate over residues 556–579; that stretch reads SSQQSAPPAPVSVETLSGAEGGET.

The protein belongs to the HRD1 family. Homodimer.

The protein resides in the endoplasmic reticulum membrane. It catalyses the reaction S-ubiquitinyl-[E2 ubiquitin-conjugating enzyme]-L-cysteine + [acceptor protein]-L-lysine = [E2 ubiquitin-conjugating enzyme]-L-cysteine + N(6)-ubiquitinyl-[acceptor protein]-L-lysine.. It functions in the pathway protein modification; protein ubiquitination. Its function is as follows. E3 ubiquitin-protein ligase which accepts ubiquitin specifically from endoplasmic reticulum-associated UBC7 E2 ligase and transfers it to substrates, promoting their degradation. Component of the endoplasmic reticulum quality control (ERQC) system also called ER-associated degradation (ERAD) involved in ubiquitin-dependent degradation of misfolded endoplasmic reticulum proteins. Also promotes the degradation of normal but naturally short-lived proteins. Protects cells from ER stress-induced apoptosis. Sequesters p53 in the cytoplasm and promotes its degradation, thereby negatively regulating its biological function in transcription, cell cycle regulation and apoptosis. In Xenopus laevis (African clawed frog), this protein is E3 ubiquitin-protein ligase synoviolin A (syvn1-a).